Reading from the N-terminus, the 387-residue chain is Galactokinase (387 aa).

Position 33 to 36 (33 to 36 (EHTD)) interacts with substrate. ATP-binding positions include serine 67 and 123–129 (GAGLSSS). Serine 129 and glutamate 161 together coordinate Mg(2+). The Proton acceptor role is filled by aspartate 173. Position 223 (tyrosine 223) interacts with substrate.

Belongs to the GHMP kinase family. GalK subfamily.

The protein resides in the cytoplasm. It catalyses the reaction alpha-D-galactose + ATP = alpha-D-galactose 1-phosphate + ADP + H(+). It participates in carbohydrate metabolism; galactose metabolism. Its function is as follows. Catalyzes the transfer of the gamma-phosphate of ATP to D-galactose to form alpha-D-galactose-1-phosphate (Gal-1-P). The protein is Galactokinase of Lacticaseibacillus casei (Lactobacillus casei).